A 404-amino-acid chain; its full sequence is Caspase b (404 aa).

The propeptide occupies Met1 to Gln171. The Pyrin domain occupies Leu8–Ala80. Catalysis depends on residues His249 and Cys296. A propeptide spanning residues Ser301–Trp316 is cleaved from the precursor.

This sequence belongs to the peptidase C14A family. As to quaternary structure, upon direct LPS-binding, forms large homooligomers, resulting in its activation. These oligomers are often referred to as 'non-canonical inflammasomes'. Heterotetramer that consists of two anti-parallel arranged heterodimers, each one formed by a 20 kDa (p20) and a 10 kDa (p10) subunit. Interacts with caspa. Interacts with pycard; the interaction only occurs in the presence of nlrp1. Component of NLRP1 inflammasomes. Inflammasomes are supramolecular complexes that assemble in the cytosol in response to pathogens and other damage-associated signals and play critical roles in innate immunity and inflammation. The NLRP1 inflammasome is composed of the signal sensor nlrp1, and the adapter pycard (asc), which recruit effector pro-inflammatory caspases caspa and/or caspb. The interaction between nlrp1 and pycard is required for the sequential recruitment of caspa and then caspb. Caspa is preferentially recruited first and this causes the cleavage of pro-il1b into the midformed il1b. This is followed by the recruitment of caspb, which is activated and cleaves the midformed il1b resulting in il1b maturation. In terms of processing, the two subunits are derived from the precursor sequence by an autocatalytic mechanism. Expressed in the spleen, kidney and liver, and highly expressed in the gills and gut.

It is found in the inflammasome. The protein resides in the cytoplasm. It carries out the reaction Strict requirement for Asp at the P1 position. It has a preferred cleavage sequence of Tyr-Val-Ala-Asp-|- but also cleaves at Asp-Glu-Val-Asp-|-.. With respect to regulation, activated by homooligomerization induced by direct binding to cytosolic LPS. In terms of biological role, thiol protease which cleaves IL-1 beta (il1b), releasing the mature cytokine which is involved in a variety of inflammatory processes, and mediates apoptosis. Component of the NLRP1 inflammasome, which plays a crucial role in innate immunity and inflammation. In response to pathogens and other damage-associated signals, recruited to the NLRP1 inflammasome in its precursor form following the recruitment of caspase caspa. Its subsequent activation causes the cleavage of the midformed pro-il1b and results in il1b maturation and secretion in the extracellular milieu. Activated by direct binding to bacterial lipopolysaccharides (LPS), which causes non-canonical inflammasome activation and results in the pyroptosis of infected cells and their extrusion into the gut lumen, as well as in cytokine secretion. Plays a crucial role in the restriction of bacterial infection to intestinal sites. Pyroptosis limits bacterial replication, while cytokine secretion promotes the recruitment and activation of immune cells and triggers mucosal inflammation. Promotes pyroptosis by bacterial infection by E.piscicida. The sequence is that of Caspase b from Danio rerio (Zebrafish).